Here is a 481-residue protein sequence, read N- to C-terminus: MQWETVIGLEIHAQLSTQSKIFSASATSFGAEPNTQASLIDLGMPGTLPVLNAEAVRMAVKFGLAIDAHIAPQNVFARKNYFYPDLPKGYQTSQMDHPIVGKGHLDITLEDGTVKRIGITRAHLEEDAGKSLHEDFHGMSGIDLNRAGTPLLEIVSEPDIRSAKEAVAYVKAIHALVRYLGICDGNMAEGSLRCDCNVSVRPKGQEAFGTRAEIKNVNSFRFIEKAINHEIQRQIELIEDGGKVIQETRLYDPNKDETRSMRGKEEANDYRYFPCPDLLPVVIEQSFLDEVRSQLPELPTQKRERFQSQYGLSTYDASVLSASREMAEYFEEVAKVCGDAKLAANWVMGELSSLLNKEGLEIEQSPVSAEHLGGMILRIKDNTISGKIAKMVFEAMAAGEGSADAIIESKGLKQVTDSGAIEAMLDEVLAANAEQVEQYRASDEAKRGKMFGFFVGQAMKASKGKANPGQVNELLKKKLEG.

This sequence belongs to the GatB/GatE family. GatB subfamily. In terms of assembly, heterotrimer of A, B and C subunits.

The catalysed reaction is L-glutamyl-tRNA(Gln) + L-glutamine + ATP + H2O = L-glutaminyl-tRNA(Gln) + L-glutamate + ADP + phosphate + H(+). It carries out the reaction L-aspartyl-tRNA(Asn) + L-glutamine + ATP + H2O = L-asparaginyl-tRNA(Asn) + L-glutamate + ADP + phosphate + 2 H(+). Allows the formation of correctly charged Asn-tRNA(Asn) or Gln-tRNA(Gln) through the transamidation of misacylated Asp-tRNA(Asn) or Glu-tRNA(Gln) in organisms which lack either or both of asparaginyl-tRNA or glutaminyl-tRNA synthetases. The reaction takes place in the presence of glutamine and ATP through an activated phospho-Asp-tRNA(Asn) or phospho-Glu-tRNA(Gln). The chain is Aspartyl/glutamyl-tRNA(Asn/Gln) amidotransferase subunit B from Ectopseudomonas mendocina (strain ymp) (Pseudomonas mendocina).